The sequence spans 281 residues: Probable protein phosphatase 2C 9 (281 aa).

The PPM-type phosphatase domain occupies 33–280; sequence KYGFSLVKGK…DDISCVVVRF (248 aa). Residues D70, G71, D232, and D271 each contribute to the Mn(2+) site.

The protein belongs to the PP2C family. In terms of assembly, interacts with phytochromes (via N-terminus). Mg(2+) serves as cofactor. The cofactor is Mn(2+).

It is found in the nucleus. It catalyses the reaction O-phospho-L-seryl-[protein] + H2O = L-seryl-[protein] + phosphate. The catalysed reaction is O-phospho-L-threonyl-[protein] + H2O = L-threonyl-[protein] + phosphate. Functionally, involved in the regulation of phytochrome signaling. May regulate phytochrome-interacting factor 3 (PIF3) through the dephosphorylation of phytochrome. This is Probable protein phosphatase 2C 9 from Arabidopsis thaliana (Mouse-ear cress).